A 201-amino-acid chain; its full sequence is Small ribosomal subunit protein uS4 (201 aa).

The 63-residue stretch at 93-155 (CRLDNIVYRM…SKSLSMFEVN (63 aa)) folds into the S4 RNA-binding domain.

The protein belongs to the universal ribosomal protein uS4 family. In terms of assembly, part of the 30S ribosomal subunit. Contacts protein S5. The interaction surface between S4 and S5 is involved in control of translational fidelity.

Its function is as follows. One of the primary rRNA binding proteins, it binds directly to 16S rRNA where it nucleates assembly of the body of the 30S subunit. Functionally, with S5 and S12 plays an important role in translational accuracy. This is Small ribosomal subunit protein uS4 from Elusimicrobium minutum (strain Pei191).